The chain runs to 952 residues: uncharacterized protein (952 aa).

In terms of domain architecture, CheB-type methylesterase spans 1–141; sequence MASLLARHTK…PWIADYLIRR (141 aa). The CheR-type methyltransferase domain maps to 168-440; the sequence is VGQFDGLEPA…SARHRIWQAL (273 aa). Polar residues predominate over residues 923–935; sequence HNQTEASPETSSG. Residues 923–952 are disordered; it reads HNQTEASPETSSGGLPGSDGTGADGGAPRA. The span at 936–952 shows a compositional bias: gly residues; sequence GLPGSDGTGADGGAPRA.

This is an uncharacterized protein from Rhodobacter capsulatus (Rhodopseudomonas capsulata).